Consider the following 126-residue polypeptide: Aspartate 1-decarboxylase (126 aa).

Ser25 functions as the Schiff-base intermediate with substrate; via pyruvic acid in the catalytic mechanism. Residue Ser25 is modified to Pyruvic acid (Ser). Thr57 serves as a coordination point for substrate. Tyr58 functions as the Proton donor in the catalytic mechanism. 73–75 (GAA) contacts substrate.

The protein belongs to the PanD family. Heterooctamer of four alpha and four beta subunits. The cofactor is pyruvate. In terms of processing, is synthesized initially as an inactive proenzyme, which is activated by self-cleavage at a specific serine bond to produce a beta-subunit with a hydroxyl group at its C-terminus and an alpha-subunit with a pyruvoyl group at its N-terminus.

It is found in the cytoplasm. It catalyses the reaction L-aspartate + H(+) = beta-alanine + CO2. It participates in cofactor biosynthesis; (R)-pantothenate biosynthesis; beta-alanine from L-aspartate: step 1/1. Catalyzes the pyruvoyl-dependent decarboxylation of aspartate to produce beta-alanine. This Azotobacter vinelandii (strain DJ / ATCC BAA-1303) protein is Aspartate 1-decarboxylase.